The sequence spans 541 residues: NADH-ubiquinone oxidoreductase chain 5 (541 aa).

The next 16 helical transmembrane spans lie at Leu-17–Phe-37, Thr-48–Met-70, Phe-74–Met-94, Gly-98–Phe-118, Ile-130–Phe-150, Tyr-157–Thr-177, Ala-191–Tyr-213, Gly-226–Phe-246, Leu-263–Phe-283, His-285–Val-305, Ser-322–Phe-342, Ser-353–Tyr-373, Leu-404–Gly-424, Ile-429–Leu-449, Ser-455–Gly-475, and Phe-518–Met-538.

Belongs to the complex I subunit 5 family.

The protein resides in the mitochondrion inner membrane. It carries out the reaction a ubiquinone + NADH + 5 H(+)(in) = a ubiquinol + NAD(+) + 4 H(+)(out). In terms of biological role, core subunit of the mitochondrial membrane respiratory chain NADH dehydrogenase (Complex I) that is believed to belong to the minimal assembly required for catalysis. Complex I functions in the transfer of electrons from NADH to the respiratory chain. The immediate electron acceptor for the enzyme is believed to be ubiquinone. The polypeptide is NADH-ubiquinone oxidoreductase chain 5 (ND5) (Artemia franciscana (Brine shrimp)).